A 429-amino-acid chain; its full sequence is MKFTESERLQQLSNEYILGGVNSPSRSYKAVGGGAPVVMKEGHGAYLYDVDGNKYIDYLQAYGPIITGHAHPHITEAIQDQAAKGVLYGTPTELEINFSKKLREAVPSLEKIRFVNSGTEAVMTTIRVARAYTKRNKIIKFAGSYHGHSDLVLVAAGSGPSQLGSPDSAGVPQSVAQEVITVPFNDIESYREAIDYWKDDIAAVLVEPIVGNFGMVMPQPGFLEEVNKISHDNGTLVIYDEVITAFRFHYGAAQDLLGVKPDLTAFGKIVGGGLPIGGYGGRQDIMEHVAPLGPAYQAGTMAGNPLSMRAGIALLEVLEQEGVYDKLDQLGRRLEEGLQKLIDKHHITATINRIYGSLTLYFTNEKVTHYEQVENSDGDAFAQFFKLMLNQGINLAPSKFEAWFLTTEHTEEDIDRTLEAADYAFSKMK.

N6-(pyridoxal phosphate)lysine is present on lysine 268.

This sequence belongs to the class-III pyridoxal-phosphate-dependent aminotransferase family. HemL subfamily. In terms of assembly, homodimer. It depends on pyridoxal 5'-phosphate as a cofactor.

Its subcellular location is the cytoplasm. The catalysed reaction is (S)-4-amino-5-oxopentanoate = 5-aminolevulinate. It functions in the pathway porphyrin-containing compound metabolism; protoporphyrin-IX biosynthesis; 5-aminolevulinate from L-glutamyl-tRNA(Glu): step 2/2. The protein is Glutamate-1-semialdehyde 2,1-aminomutase 2 of Staphylococcus epidermidis (strain ATCC 35984 / DSM 28319 / BCRC 17069 / CCUG 31568 / BM 3577 / RP62A).